Reading from the N-terminus, the 100-residue chain is NADH-quinone oxidoreductase subunit K (100 aa).

Transmembrane regions (helical) follow at residues 2–22 (VTLNHYLILSSLLFMIGLVGV), 28–48 (LLMLFFSTEIMLNAVNVGLVA), and 63–83 (FFIIAVAASEVAVGLGLLILW).

It belongs to the complex I subunit 4L family. In terms of assembly, NDH-1 is composed of 14 different subunits. Subunits NuoA, H, J, K, L, M, N constitute the membrane sector of the complex.

It localises to the cell inner membrane. The catalysed reaction is a quinone + NADH + 5 H(+)(in) = a quinol + NAD(+) + 4 H(+)(out). Its function is as follows. NDH-1 shuttles electrons from NADH, via FMN and iron-sulfur (Fe-S) centers, to quinones in the respiratory chain. The immediate electron acceptor for the enzyme in this species is believed to be ubiquinone. Couples the redox reaction to proton translocation (for every two electrons transferred, four hydrogen ions are translocated across the cytoplasmic membrane), and thus conserves the redox energy in a proton gradient. In Wolinella succinogenes (strain ATCC 29543 / DSM 1740 / CCUG 13145 / JCM 31913 / LMG 7466 / NCTC 11488 / FDC 602W) (Vibrio succinogenes), this protein is NADH-quinone oxidoreductase subunit K.